The sequence spans 2961 residues: Zinc finger ZZ-type and EF-hand domain-containing protein 1 (2961 aa).

Residues 1–41 form a disordered region; sequence MGNAPSHSSEDEAAAAGGEGWGPHQDWAAVSGTTPGPGVAA. Residue G2 is the site of N-myristoyl glycine attachment. Positions 111-146 constitute an EF-hand domain; it reads CSSEQFEEAFAQFDAEGDGTVDAENMLEALKNSSGA. The region spanning 226–405 is the DOC domain; the sequence is LVQKEKESPG…AIWYWSLLTS (180 aa). Residues S240, S1475, S1488, and S1509 each carry the phosphoserine modification. Residues 1446–1531 form a disordered region; the sequence is TADETSHLQP…PTRRPPFTRG (86 aa). Positions 1485-1502 are enriched in polar residues; the sequence is GDQSPGLGTQPKLPSSSG. Phosphothreonine is present on T1512. Residues 1516–1531 show a composition bias toward low complexity; sequence PLSPSTPTRRPPFTRG. The residue at position 1518 (S1518) is a Phosphoserine. A phosphothreonine mark is found at T1521 and T1523. A phosphoserine mark is found at S1537 and S1540. 2 ZZ-type zinc fingers span residues 1778-1833 and 1827-1882; these read NVDI…FTCD and NMEF…MVTI. Zn(2+)-binding residues include C1783, C1786, C1797, C1800, C1806, C1809, H1819, H1823, C1832, C1835, C1846, C1849, C1855, C1858, H1868, and H1872. 2 disordered regions span residues 1994–2078 and 2426–2455; these read AVQG…PSPE and LELD…KLDP. The segment covering 2009–2027 has biased composition (basic and acidic residues); sequence AVHEEIRPVDFKQRNKADK. The segment covering 2033-2043 has biased composition (polar residues); that stretch reads KDPSCQTQISD. A compositionally biased stretch (basic and acidic residues) spans 2426–2440; it reads LELDERGDREEEVER. S2444 is subject to Phosphoserine. K2667 carries the N6-acetyllysine modification.

As to quaternary structure, interacts with KLF6 and KLF9. Interacts via (ZZ-type 2 zinc finger) with histone H3 trimethylated at 'Lys-4' (H3K4me3) and histone H3 acetylated at 'Lys-4' (H3K4ac). As to expression, expressed at low levels in cerebellum.

In terms of biological role, histone H3 reader which may act as a transcriptional coactivator for KLF6 and KLF9 transcription factors. This chain is Zinc finger ZZ-type and EF-hand domain-containing protein 1, found in Homo sapiens (Human).